Reading from the N-terminus, the 200-residue chain is Recombination protein RecR (200 aa).

The segment at Cys60 to Cys75 adopts a C4-type zinc-finger fold. Residues Thr83 to Pro177 form the Toprim domain.

This sequence belongs to the RecR family.

Functionally, may play a role in DNA repair. It seems to be involved in an RecBC-independent recombinational process of DNA repair. It may act with RecF and RecO. This chain is Recombination protein RecR, found in Francisella tularensis subsp. tularensis (strain WY96-3418).